A 344-amino-acid polypeptide reads, in one-letter code: N-acetyl-gamma-glutamyl-phosphate reductase (344 aa).

The active site involves Cys-149.

Belongs to the NAGSA dehydrogenase family. Type 1 subfamily.

It localises to the cytoplasm. The catalysed reaction is N-acetyl-L-glutamate 5-semialdehyde + phosphate + NADP(+) = N-acetyl-L-glutamyl 5-phosphate + NADPH + H(+). The protein operates within amino-acid biosynthesis; L-arginine biosynthesis; N(2)-acetyl-L-ornithine from L-glutamate: step 3/4. Catalyzes the NADPH-dependent reduction of N-acetyl-5-glutamyl phosphate to yield N-acetyl-L-glutamate 5-semialdehyde. The chain is N-acetyl-gamma-glutamyl-phosphate reductase from Thermoanaerobacter pseudethanolicus (strain ATCC 33223 / 39E) (Clostridium thermohydrosulfuricum).